The primary structure comprises 275 residues: MAVLNSNPEILLRKRKNNDRKRLEKQEQARQRQLEQKKKNDQRSKKFVRAETLVSNYKSNELENKRIKHITKFEKQSQADKISQAKEDDESAKLLFIIRIPDHTKGLKVPSKARKVLHLLRLNRPNTGVFVKLTPATVPLLKLISPYIVAGKPSLNSIRKLFQKRACISVIDEETKEPRITKLDNNGVVEDKFGDDLGCICIEDLIHELATLGEHFKTVSNWILPFKLNAPVSGWGPQAKLAKLQYSNEHQRKISLAGDAKLNEIDIDQFIDEQN.

The segment at 14–45 (KRKNNDRKRLEKQEQARQRQLEQKKKNDQRSK) is disordered. Over residues 20 to 44 (RKRLEKQEQARQRQLEQKKKNDQRS) the composition is skewed to basic and acidic residues.

The protein belongs to the universal ribosomal protein uL30 family.

It localises to the nucleus. It is found in the nucleolus. In terms of biological role, involved in the biogenesis of the 60S ribosomal subunit. May act as a specificity factor that binds precursor rRNAs and tethers the enzymes that carry out the early 5' to 3' exonucleolytic reactions that generate the mature rRNAs. The polypeptide is Ribosome biogenesis protein RLP7 (RLP7) (Debaryomyces hansenii (strain ATCC 36239 / CBS 767 / BCRC 21394 / JCM 1990 / NBRC 0083 / IGC 2968) (Yeast)).